The following is a 461-amino-acid chain: UDP-N-acetylmuramoylalanine--D-glutamate ligase (461 aa).

Residue 123–129 (GTNGKTT) coordinates ATP.

This sequence belongs to the MurCDEF family.

It is found in the cytoplasm. The enzyme catalyses UDP-N-acetyl-alpha-D-muramoyl-L-alanine + D-glutamate + ATP = UDP-N-acetyl-alpha-D-muramoyl-L-alanyl-D-glutamate + ADP + phosphate + H(+). It functions in the pathway cell wall biogenesis; peptidoglycan biosynthesis. Functionally, cell wall formation. Catalyzes the addition of glutamate to the nucleotide precursor UDP-N-acetylmuramoyl-L-alanine (UMA). The protein is UDP-N-acetylmuramoylalanine--D-glutamate ligase of Natranaerobius thermophilus (strain ATCC BAA-1301 / DSM 18059 / JW/NM-WN-LF).